The primary structure comprises 261 residues: Guanine nucleotide exchange factor BopE (261 aa).

The segment covering 241–253 (RRAAQDASRDEKG) has biased composition (basic and acidic residues). The tract at residues 241 to 261 (RRAAQDASRDEKGAANAADGA) is disordered.

Belongs to the GEF (guanine exchange factor) SopE family. In terms of assembly, monomer. Interacts with human CDC42.

The protein localises to the secreted. In terms of biological role, activator for both CDC42 and RAC1 by directly interacting with these Rho GTPases and acting as a guanine nucleotide exchange factor (GEF). This activation results in actin cytoskeleton rearrangements and stimulates membrane ruffling, thus promoting bacterial entry into non-phagocytic cells. The protein is Guanine nucleotide exchange factor BopE (bopE) of Burkholderia thailandensis (strain ATCC 700388 / DSM 13276 / CCUG 48851 / CIP 106301 / E264).